Consider the following 90-residue polypeptide: Acylphosphatase (90 aa).

Residues 3–90 form the Acylphosphatase-like domain; it reads KKQFVVYGIV…HSFGLFSVEH (88 aa). Active-site residues include arginine 18 and asparagine 36.

Belongs to the acylphosphatase family.

The catalysed reaction is an acyl phosphate + H2O = a carboxylate + phosphate + H(+). In Mannheimia succiniciproducens (strain KCTC 0769BP / MBEL55E), this protein is Acylphosphatase (acyP).